Here is a 237-residue protein sequence, read N- to C-terminus: Ribosomal RNA small subunit methyltransferase G (237 aa).

S-adenosyl-L-methionine-binding positions include Gly78, Phe83, 129–130 (AE), and Arg148.

The protein belongs to the methyltransferase superfamily. RNA methyltransferase RsmG family.

Its subcellular location is the cytoplasm. Functionally, specifically methylates the N7 position of a guanine in 16S rRNA. This is Ribosomal RNA small subunit methyltransferase G from Streptococcus pyogenes serotype M49 (strain NZ131).